Consider the following 73-residue polypeptide: Translational regulator CsrA (73 aa).

A disordered region spans residues 54–73 (ENRAASDSPWSPNSLPQLPV). Residues 61-73 (SPWSPNSLPQLPV) show a composition bias toward polar residues.

The protein belongs to the CsrA/RsmA family. In terms of assembly, homodimer; the beta-strands of each monomer intercalate to form a hydrophobic core, while the alpha-helices form wings that extend away from the core.

It localises to the cytoplasm. A translational regulator that binds mRNA to regulate translation initiation and/or mRNA stability. Usually binds in the 5'-UTR at or near the Shine-Dalgarno sequence preventing ribosome-binding, thus repressing translation. Its main target seems to be the major flagellin gene, while its function is anatagonized by FliW. The sequence is that of Translational regulator CsrA from Treponema pallidum (strain Nichols).